Reading from the N-terminus, the 308-residue chain is MSLIKVPCMQITNMHCSGQTVSLAAGDYHATIVTVGAGLAELTFQGCHLVIPHKPEEMPLAHLGKVLIPWPNRIANGCYRYQGQEYQLPINEHSSKAAIHGLLAWRDWQISELTATSVTLTAFLPPSYGYPFMLASQVVYSLNAHTGLSVEIASQNIGTVAAPYGVGIHPYLTCNLTSVDEYLFQLPANQVYAVDEHANPTTLHHVDELDLNFTQAKKIAATKIDHTFKTANDLWEMTITHPQQALSVSLCSDQLWVQVYSGEKLQRQGLAVEPMSCPPNAFNSGIDLLLLESGKPHRLFFNIYGQRK.

This is an uncharacterized protein from Escherichia coli (strain K12).